We begin with the raw amino-acid sequence, 64 residues long: SPbeta prophage-derived uncharacterized protein YonP (64 aa).

The protein is SPbeta prophage-derived uncharacterized protein YonP (yonP) of Bacillus subtilis (strain 168).